The chain runs to 514 residues: Peptide chain release factor 3 (514 aa).

The region spanning 8-268 is the tr-type G domain; that stretch reads KKRRTFAIIS…SFLAFAPEPH (261 aa). GTP is bound by residues 17-24, 85-89, and 139-142; these read SHPDAGKT, DTPGH, and NKLD.

Belongs to the TRAFAC class translation factor GTPase superfamily. Classic translation factor GTPase family. PrfC subfamily.

It localises to the cytoplasm. Its function is as follows. Increases the formation of ribosomal termination complexes and stimulates activities of RF-1 and RF-2. It binds guanine nucleotides and has strong preference for UGA stop codons. It may interact directly with the ribosome. The stimulation of RF-1 and RF-2 is significantly reduced by GTP and GDP, but not by GMP. The polypeptide is Peptide chain release factor 3 (Streptococcus mutans serotype c (strain ATCC 700610 / UA159)).